Reading from the N-terminus, the 802-residue chain is Leucine--tRNA ligase (802 aa).

The 'HIGH' region signature appears at 40 to 51 (PYPSGAGLHVGH). Residues 576 to 580 (KMSKS) carry the 'KMSKS' region motif. K579 provides a ligand contact to ATP.

This sequence belongs to the class-I aminoacyl-tRNA synthetase family.

Its subcellular location is the cytoplasm. The catalysed reaction is tRNA(Leu) + L-leucine + ATP = L-leucyl-tRNA(Leu) + AMP + diphosphate. The sequence is that of Leucine--tRNA ligase from Bacillus anthracis (strain A0248).